We begin with the raw amino-acid sequence, 175 residues long: tRNA (cytidine(56)-2'-O)-methyltransferase (175 aa).

S-adenosyl-L-methionine is bound at residue L83.

It belongs to the aTrm56 family. As to quaternary structure, homodimer.

Its subcellular location is the cytoplasm. The enzyme catalyses cytidine(56) in tRNA + S-adenosyl-L-methionine = 2'-O-methylcytidine(56) in tRNA + S-adenosyl-L-homocysteine + H(+). Specifically catalyzes the AdoMet-dependent 2'-O-ribose methylation of cytidine at position 56 in tRNAs. This chain is tRNA (cytidine(56)-2'-O)-methyltransferase, found in Methanosphaera stadtmanae (strain ATCC 43021 / DSM 3091 / JCM 11832 / MCB-3).